The primary structure comprises 40 residues: Large ribosomal subunit protein bL36 (40 aa).

Belongs to the bacterial ribosomal protein bL36 family.

This is Large ribosomal subunit protein bL36 from Corynebacterium aurimucosum (strain ATCC 700975 / DSM 44827 / CIP 107346 / CN-1) (Corynebacterium nigricans).